The chain runs to 577 residues: 2-succinyl-5-enolpyruvyl-6-hydroxy-3-cyclohexene-1-carboxylate synthase (577 aa).

The protein belongs to the TPP enzyme family. MenD subfamily. As to quaternary structure, homodimer. It depends on Mg(2+) as a cofactor. The cofactor is Mn(2+). Requires thiamine diphosphate as cofactor.

It carries out the reaction isochorismate + 2-oxoglutarate + H(+) = 5-enolpyruvoyl-6-hydroxy-2-succinyl-cyclohex-3-ene-1-carboxylate + CO2. Its pathway is quinol/quinone metabolism; 1,4-dihydroxy-2-naphthoate biosynthesis; 1,4-dihydroxy-2-naphthoate from chorismate: step 2/7. The protein operates within quinol/quinone metabolism; menaquinone biosynthesis. Catalyzes the thiamine diphosphate-dependent decarboxylation of 2-oxoglutarate and the subsequent addition of the resulting succinic semialdehyde-thiamine pyrophosphate anion to isochorismate to yield 2-succinyl-5-enolpyruvyl-6-hydroxy-3-cyclohexene-1-carboxylate (SEPHCHC). The polypeptide is 2-succinyl-5-enolpyruvyl-6-hydroxy-3-cyclohexene-1-carboxylate synthase (Porphyromonas gingivalis (strain ATCC BAA-308 / W83)).